The sequence spans 195 residues: Thymidylate kinase (195 aa).

Position 7 to 14 (7 to 14 (GIDGVGKS)) interacts with ATP.

This sequence belongs to the thymidylate kinase family.

The enzyme catalyses dTMP + ATP = dTDP + ADP. Phosphorylation of dTMP to form dTDP in both de novo and salvage pathways of dTTP synthesis. The chain is Thymidylate kinase from Campylobacter concisus (strain 13826).